Consider the following 547-residue polypeptide: Putative HMP/thiamine import ATP-binding protein YkoD (547 aa).

ABC transporter domains are found at residues 8–250 (LTVE…KLGI) and 295–523 (LEVS…KAKL). Residues 42 to 49 (GPSGCGKS) and 327 to 334 (GPNGTGKS) each bind ATP.

The protein belongs to the ABC transporter superfamily. As to quaternary structure, the complex is composed of two ATP-binding proteins (YkoD), two transmembrane proteins (YkoC and YkoE) and a solute-binding protein (YkoF).

The protein resides in the cell membrane. Its function is as follows. Part of the ABC transporter complex YkoCDEF that could transport hydroxymethylpyrimidine (HMP) and/or thiamine. Could also transport other HMP-containing products. Responsible for energy coupling to the transport system. This chain is Putative HMP/thiamine import ATP-binding protein YkoD (ykoD), found in Bacillus subtilis (strain 168).